The sequence spans 441 residues: Tubulin beta chain, nucleomorph (441 aa).

GTP contacts are provided by Q11, E69, S138, G142, T143, G144, N204, and N226. Residue E69 coordinates Mg(2+).

It belongs to the tubulin family. In terms of assembly, dimer of alpha and beta chains. A typical microtubule is a hollow water-filled tube with an outer diameter of 25 nm and an inner diameter of 15 nM. Alpha-beta heterodimers associate head-to-tail to form protofilaments running lengthwise along the microtubule wall with the beta-tubulin subunit facing the microtubule plus end conferring a structural polarity. Microtubules usually have 13 protofilaments but different protofilament numbers can be found in some organisms and specialized cells. Mg(2+) is required as a cofactor.

Functionally, tubulin is the major constituent of microtubules, a cylinder consisting of laterally associated linear protofilaments composed of alpha- and beta-tubulin heterodimers. Microtubules grow by the addition of GTP-tubulin dimers to the microtubule end, where a stabilizing cap forms. Below the cap, tubulin dimers are in GDP-bound state, owing to GTPase activity of alpha-tubulin. This Guillardia theta (Cryptophyte) protein is Tubulin beta chain, nucleomorph (tubB).